The primary structure comprises 363 residues: Disease resistance protein RBA1 (363 aa).

Residues 12–175 (PVPKVFLSFR…EIVKEVERVL (164 aa)) enclose the TIR domain. Residues 21–26 (RGEEIR) and Gly53 contribute to the NAD(+) site. Glu86 is a catalytic residue.

In terms of assembly, homooligomer; homooligomerization is required for activity.

Its subcellular location is the cytoplasm. The protein resides in the nucleus. It localises to the nucleoplasm. The catalysed reaction is NAD(+) + H2O = ADP-D-ribose + nicotinamide + H(+). It carries out the reaction NADP(+) + H2O = ADP-D-ribose 2'-phosphate + nicotinamide + H(+). Functionally, disease resistance (R) protein that specifically recognizes the HopBA1 type III effector protein from P.syringae, and triggers cell death. Acts as a NAD(+) hydrolase (NADase): in response to pathogen-recognition, catalyzes cleavage of NAD(+) into ADP-D-ribose (ADPR) and nicotinamide; NAD(+) cleavage triggering a defense system that promotes cell death. In addition to ADPR, also generates a cyclization variant of cyclic ADPR (cADPR), termed v-cADPR, for which the cyclizing bond is unknown. Also able to hydrolyze NADP(+), but not other NAD(+)-related molecules. The protein is Disease resistance protein RBA1 of Arabidopsis thaliana (Mouse-ear cress).